An 86-amino-acid polypeptide reads, in one-letter code: Mu-theraphotoxin-Cg2a 3 (86 aa).

The first 21 residues, 1–21 (MKVSVVITLAVLGVMFVWASA), serve as a signal peptide directing secretion. Positions 22–50 (AELKERGSDQRDSPAWIKSMERIFQSEER) are excised as a propeptide. 3 disulfides stabilise this stretch: C52/C66, C59/C71, and C65/C78. At F84 the chain carries Phenylalanine amide.

It belongs to the neurotoxin 10 (Hwtx-1) family. 37 (Jztx-31) subfamily. In terms of tissue distribution, expressed by the venom gland.

The protein localises to the secreted. In terms of biological role, inhibits both peak current and fast inactivation of voltage-gated sodium channels (Nav) channels. Inhibits the inactivation of Nav on DRG neurons (EC(50)=1.77 uM) and peak current of cardiac myocytes (IC(50)=0.90 uM). The sequence is that of Mu-theraphotoxin-Cg2a 3 from Chilobrachys guangxiensis (Chinese earth tiger tarantula).